Here is a 205-residue protein sequence, read N- to C-terminus: Red chlorophyll catabolite reductase (205 aa).

2 residues coordinate substrate: E39 and D175.

Homodimer. Post-translationally, the N-terminus is blocked. In etiolated and green primary leaves. Low amount in roots.

The protein localises to the plastid. The protein resides in the chloroplast stroma. It carries out the reaction primary fluorescent chlorophyll catabolite + 2 oxidized [2Fe-2S]-[ferredoxin] = red chlorophyll catabolite + 2 reduced [2Fe-2S]-[ferredoxin] + 3 H(+). It participates in porphyrin-containing compound metabolism; chlorophyll degradation. In terms of biological role, catalyzes the key reaction of chlorophyll catabolism, porphyrin macrocycle cleavage of pheophorbide a (pheide a) to a primary fluorescent catabolite (pFCC). Works in a two-step reaction with pheophorbide a oxygenase (PaO) by reducing the C20/C1 double bond of the intermediate, RCC. The protein is Red chlorophyll catabolite reductase (rccR) of Hordeum vulgare (Barley).